Consider the following 599-residue polypeptide: MHRYRSHTCGELRASDVGTDVRLSGWLHNRRDLGGILFIDLRDHYGLVQLVARPGTPGNDALAKLTKETVVRIDGKVSARGADNVNPELPTGEIEIEVTEVEVLGEAGPLPFTINTEDGVNEERRLEYRFLDLRRERMHRNIMLRSAVIASIRSKMVALGFNEMATPILTATSPEGARDFVVPSRLNPGKFYALPQAPQQFKQLLMISGFDRYFQIAPCFRDEDARADRSPGEFYQLDVEMSFVEQEDVFQPIEKLMTELFTEFGNGREVTSPFPRIPFRESMLKYGNDKPDLRAKLELVDISDVFADSGFKAFAGKHVRALPVPDTAGQSRKFFDGLGEYAVEHGAKGLAWVRVGEDGTLAGPIAKFLTETDVKTLTERLSLVPGHAVFFGAGEFDEVSKIMSAVRVEAAKRAGHFEEGVFRFCWIVDFPMYEKDEETGKIDFSHNPFSMPQGGLADLEEKDPLDILAWQYDIVCNGIELSSGAIRNHEPELMLKAFEIAGYDRETVEHEFAGMLRAFRLGAPPHGGIAPGVDRIVMLLADEPNIRETIAFPLNGNAQDLMMGAPTELDESRLRELNIQLRKPVAAKGANAPEKTAEK.

Glu175 contacts L-aspartate. The segment at Gln199 to Lys202 is aspartate. Residues Arg221 and His446 each contribute to the L-aspartate site. ATP is bound at residue Arg221–Glu223. Glu480 lines the ATP pocket. An L-aspartate-binding site is contributed by Arg487. An ATP-binding site is contributed by Gly532–Arg535.

It belongs to the class-II aminoacyl-tRNA synthetase family. Type 1 subfamily. In terms of assembly, homodimer.

Its subcellular location is the cytoplasm. It catalyses the reaction tRNA(Asp) + L-aspartate + ATP = L-aspartyl-tRNA(Asp) + AMP + diphosphate. Its function is as follows. Catalyzes the attachment of L-aspartate to tRNA(Asp) in a two-step reaction: L-aspartate is first activated by ATP to form Asp-AMP and then transferred to the acceptor end of tRNA(Asp). This Streptomyces griseus subsp. griseus (strain JCM 4626 / CBS 651.72 / NBRC 13350 / KCC S-0626 / ISP 5235) protein is Aspartate--tRNA ligase.